The primary structure comprises 169 residues: Ureidoglycolate lyase (169 aa).

It belongs to the ureidoglycolate lyase family. Homodimer. The cofactor is Ni(2+).

It catalyses the reaction (S)-ureidoglycolate = urea + glyoxylate. The protein operates within nitrogen metabolism; (S)-allantoin degradation. In terms of biological role, catalyzes the catabolism of the allantoin degradation intermediate (S)-ureidoglycolate, generating urea and glyoxylate. Involved in the utilization of allantoin as nitrogen source. In Brucella ovis (strain ATCC 25840 / 63/290 / NCTC 10512), this protein is Ureidoglycolate lyase.